The following is a 155-amino-acid chain: Ribosome maturation factor RimP (155 aa).

Belongs to the RimP family.

It localises to the cytoplasm. In terms of biological role, required for maturation of 30S ribosomal subunits. The sequence is that of Ribosome maturation factor RimP from Listeria welshimeri serovar 6b (strain ATCC 35897 / DSM 20650 / CCUG 15529 / CIP 8149 / NCTC 11857 / SLCC 5334 / V8).